A 192-amino-acid polypeptide reads, in one-letter code: Probable nicotinate-nucleotide adenylyltransferase (192 aa).

The protein belongs to the NadD family.

It catalyses the reaction nicotinate beta-D-ribonucleotide + ATP + H(+) = deamido-NAD(+) + diphosphate. It functions in the pathway cofactor biosynthesis; NAD(+) biosynthesis; deamido-NAD(+) from nicotinate D-ribonucleotide: step 1/1. Functionally, catalyzes the reversible adenylation of nicotinate mononucleotide (NaMN) to nicotinic acid adenine dinucleotide (NaAD). The chain is Probable nicotinate-nucleotide adenylyltransferase from Cytophaga hutchinsonii (strain ATCC 33406 / DSM 1761 / CIP 103989 / NBRC 15051 / NCIMB 9469 / D465).